The primary structure comprises 158 residues: 2-C-methyl-D-erythritol 2,4-cyclodiphosphate synthase (158 aa).

2 residues coordinate a divalent metal cation: aspartate 9 and histidine 11. 4-CDP-2-C-methyl-D-erythritol 2-phosphate contacts are provided by residues 9-11 (DVH) and 35-36 (HS). Histidine 43 contributes to the a divalent metal cation binding site. 4-CDP-2-C-methyl-D-erythritol 2-phosphate-binding positions include 57 to 59 (DIG), 62 to 66 (FPDTD), 101 to 107 (AQKPKMA), 133 to 136 (TTTE), phenylalanine 140, and arginine 143.

The protein belongs to the IspF family. As to quaternary structure, homotrimer. Requires a divalent metal cation as cofactor.

The enzyme catalyses 4-CDP-2-C-methyl-D-erythritol 2-phosphate = 2-C-methyl-D-erythritol 2,4-cyclic diphosphate + CMP. It participates in isoprenoid biosynthesis; isopentenyl diphosphate biosynthesis via DXP pathway; isopentenyl diphosphate from 1-deoxy-D-xylulose 5-phosphate: step 4/6. Its function is as follows. Involved in the biosynthesis of isopentenyl diphosphate (IPP) and dimethylallyl diphosphate (DMAPP), two major building blocks of isoprenoid compounds. Catalyzes the conversion of 4-diphosphocytidyl-2-C-methyl-D-erythritol 2-phosphate (CDP-ME2P) to 2-C-methyl-D-erythritol 2,4-cyclodiphosphate (ME-CPP) with a corresponding release of cytidine 5-monophosphate (CMP). This Bacillus velezensis (strain DSM 23117 / BGSC 10A6 / LMG 26770 / FZB42) (Bacillus amyloliquefaciens subsp. plantarum) protein is 2-C-methyl-D-erythritol 2,4-cyclodiphosphate synthase.